Consider the following 56-residue polypeptide: Large ribosomal subunit protein bL32 (56 aa).

A compositionally biased stretch (basic residues) spans 1–20 (MAVPKRRTSRSNTRSRRAQW). The interval 1–26 (MAVPKRRTSRSNTRSRRAQWKAKAPA) is disordered.

It belongs to the bacterial ribosomal protein bL32 family.

This Parafrankia sp. (strain EAN1pec) protein is Large ribosomal subunit protein bL32.